The following is a 72-amino-acid chain: Beta-defensin 104A (72 aa).

A signal peptide spans 1–22 (MRRLVLLLAISLLLYQDLPVRS). 3 cysteine pairs are disulfide-bonded: C30-C57, C37-C51, and C41-C58.

Belongs to the beta-defensin family.

It localises to the secreted. Its function is as follows. Has antimicrobial activity. This is Beta-defensin 104A (DEFB104A) from Gorilla gorilla gorilla (Western lowland gorilla).